The primary structure comprises 618 residues: UvrABC system protein C (618 aa).

In terms of domain architecture, GIY-YIG spans 13-92 (DKPGVYLMKN…IKKYRPKYNI (80 aa)). The UVR domain maps to 204–239 (LDIVENFKLNMEKAAENLEFEKAAMLRDKINIIEKI).

The protein belongs to the UvrC family. Interacts with UvrB in an incision complex.

It is found in the cytoplasm. The UvrABC repair system catalyzes the recognition and processing of DNA lesions. UvrC both incises the 5' and 3' sides of the lesion. The N-terminal half is responsible for the 3' incision and the C-terminal half is responsible for the 5' incision. The protein is UvrABC system protein C of Clostridium botulinum (strain Okra / Type B1).